Consider the following 161-residue polypeptide: Pathogenesis-related protein 1 (161 aa).

An N-terminal signal peptide occupies residues 1–26 (MKVTSYSRILIILAALVGALVVPLKA). Positions 34-149 (VNAHNQARSQ…NGGTIISCNY (116 aa)) constitute an SCP domain. 3 cysteine pairs are disulfide-bonded: Cys-70-Cys-138, Cys-113-Cys-117, and Cys-133-Cys-147.

Belongs to the CRISP family. Expressed in flowers, stems and roots but not in leaves.

Probably involved in the defense reaction of plants against pathogens. The sequence is that of Pathogenesis-related protein 1 from Arabidopsis thaliana (Mouse-ear cress).